The sequence spans 277 residues: 3-methyl-2-oxobutanoate hydroxymethyltransferase (277 aa).

Mg(2+)-binding residues include aspartate 53 and aspartate 96. 3-methyl-2-oxobutanoate is bound by residues aspartate 53–serine 54, aspartate 96, and lysine 126. Glutamate 128 provides a ligand contact to Mg(2+). The active-site Proton acceptor is the glutamate 195.

It belongs to the PanB family. As to quaternary structure, homodecamer; pentamer of dimers. Mg(2+) serves as cofactor.

It is found in the cytoplasm. It carries out the reaction 3-methyl-2-oxobutanoate + (6R)-5,10-methylene-5,6,7,8-tetrahydrofolate + H2O = 2-dehydropantoate + (6S)-5,6,7,8-tetrahydrofolate. The protein operates within cofactor biosynthesis; (R)-pantothenate biosynthesis; (R)-pantoate from 3-methyl-2-oxobutanoate: step 1/2. Catalyzes the reversible reaction in which hydroxymethyl group from 5,10-methylenetetrahydrofolate is transferred onto alpha-ketoisovalerate to form ketopantoate. This is 3-methyl-2-oxobutanoate hydroxymethyltransferase from Chlorobium luteolum (strain DSM 273 / BCRC 81028 / 2530) (Pelodictyon luteolum).